The sequence spans 277 residues: Putative phosphoenolpyruvate synthase regulatory protein (277 aa).

Position 157–164 (157–164 (GVSRSGKT)) interacts with ADP.

Belongs to the pyruvate, phosphate/water dikinase regulatory protein family. PSRP subfamily.

The catalysed reaction is [pyruvate, water dikinase] + ADP = [pyruvate, water dikinase]-phosphate + AMP + H(+). The enzyme catalyses [pyruvate, water dikinase]-phosphate + phosphate + H(+) = [pyruvate, water dikinase] + diphosphate. Bifunctional serine/threonine kinase and phosphorylase involved in the regulation of the phosphoenolpyruvate synthase (PEPS) by catalyzing its phosphorylation/dephosphorylation. The chain is Putative phosphoenolpyruvate synthase regulatory protein from Azoarcus sp. (strain BH72).